Consider the following 73-residue polypeptide: Putative defensin-like protein 270 (73 aa).

The signal sequence occupies residues 1–23 (MMSSKSHFVALLLIIFLIVNVQS). Disulfide bonds link C33–C72, C39–C60, C45–C70, and C49–C71.

The protein belongs to the DEFL family.

It is found in the secreted. This Arabidopsis thaliana (Mouse-ear cress) protein is Putative defensin-like protein 270.